Consider the following 260-residue polypeptide: Carbonic anhydrase 3 (260 aa).

Residue A2 is modified to N-acetylalanine. The 257-residue stretch at 3-259 folds into the Alpha-carbonic anhydrase domain; the sequence is KEWGYADHNG…IKGRIVKASF (257 aa). Residues S29, S43, S50, and S55 each carry the phosphoserine modification. The segment at 64–67 is involved in proton transfer; that stretch reads KTCR. T73 carries the post-translational modification Phosphothreonine. Zn(2+) contacts are provided by H94, H96, and H119. Y127 is modified (phosphotyrosine). Residues C182 and C187 each carry the S-glutathionyl cysteine modification. 198–199 contacts substrate; sequence TT. T216 carries the post-translational modification Phosphothreonine. Residue S219 is modified to Phosphoserine.

It belongs to the alpha-carbonic anhydrase family. Zn(2+) is required as a cofactor. Post-translationally, S-thiolated both by thiol-disulfide exchange with glutathione disulfide and by oxyradical-initiated S-thiolation with reduced glutathione. S-glutathionylated in hepatocytes under oxidative stress.

The protein resides in the cytoplasm. It catalyses the reaction hydrogencarbonate + H(+) = CO2 + H2O. Inhibited by acetazolamide. Reversible hydration of carbon dioxide. This is Carbonic anhydrase 3 (CA3) from Bos taurus (Bovine).